The following is a 130-amino-acid chain: Small ribosomal subunit protein uS8 (130 aa).

Belongs to the universal ribosomal protein uS8 family. Part of the 30S ribosomal subunit.

In terms of biological role, one of the primary rRNA binding proteins, it binds directly to 16S rRNA central domain where it helps coordinate assembly of the platform of the 30S subunit. The chain is Small ribosomal subunit protein uS8 from Nitrosopumilus maritimus (strain SCM1).